The following is a 288-amino-acid chain: 4-diphosphocytidyl-2-C-methyl-D-erythritol kinase (288 aa).

The active site involves K13. 97 to 107 (PMGGGIGGGSS) contacts ATP. D139 is an active-site residue.

The protein belongs to the GHMP kinase family. IspE subfamily.

It carries out the reaction 4-CDP-2-C-methyl-D-erythritol + ATP = 4-CDP-2-C-methyl-D-erythritol 2-phosphate + ADP + H(+). The protein operates within isoprenoid biosynthesis; isopentenyl diphosphate biosynthesis via DXP pathway; isopentenyl diphosphate from 1-deoxy-D-xylulose 5-phosphate: step 3/6. In terms of biological role, catalyzes the phosphorylation of the position 2 hydroxy group of 4-diphosphocytidyl-2C-methyl-D-erythritol. This is 4-diphosphocytidyl-2-C-methyl-D-erythritol kinase from Saccharophagus degradans (strain 2-40 / ATCC 43961 / DSM 17024).